The following is a 262-amino-acid chain: Tryptophan synthase alpha chain (262 aa).

Residues glutamate 51 and aspartate 62 each act as proton acceptor in the active site.

It belongs to the TrpA family. As to quaternary structure, tetramer of two alpha and two beta chains.

It catalyses the reaction (1S,2R)-1-C-(indol-3-yl)glycerol 3-phosphate + L-serine = D-glyceraldehyde 3-phosphate + L-tryptophan + H2O. The protein operates within amino-acid biosynthesis; L-tryptophan biosynthesis; L-tryptophan from chorismate: step 5/5. The alpha subunit is responsible for the aldol cleavage of indoleglycerol phosphate to indole and glyceraldehyde 3-phosphate. In Oceanobacillus iheyensis (strain DSM 14371 / CIP 107618 / JCM 11309 / KCTC 3954 / HTE831), this protein is Tryptophan synthase alpha chain.